Reading from the N-terminus, the 349-residue chain is S-adenosylmethionine:tRNA ribosyltransferase-isomerase (349 aa).

This sequence belongs to the QueA family. As to quaternary structure, monomer.

It localises to the cytoplasm. The enzyme catalyses 7-aminomethyl-7-carbaguanosine(34) in tRNA + S-adenosyl-L-methionine = epoxyqueuosine(34) in tRNA + adenine + L-methionine + 2 H(+). Its pathway is tRNA modification; tRNA-queuosine biosynthesis. Functionally, transfers and isomerizes the ribose moiety from AdoMet to the 7-aminomethyl group of 7-deazaguanine (preQ1-tRNA) to give epoxyqueuosine (oQ-tRNA). In Cupriavidus pinatubonensis (strain JMP 134 / LMG 1197) (Cupriavidus necator (strain JMP 134)), this protein is S-adenosylmethionine:tRNA ribosyltransferase-isomerase.